The sequence spans 508 residues: Maturase K (508 aa).

It belongs to the intron maturase 2 family. MatK subfamily.

It is found in the plastid. It localises to the chloroplast. Functionally, usually encoded in the trnK tRNA gene intron. Probably assists in splicing its own and other chloroplast group II introns. The polypeptide is Maturase K (Abrus precatorius (Indian licorice)).